A 4349-amino-acid chain; its full sequence is Dynein heavy chain, cytoplasmic (4349 aa).

The segment at 1–1907 (MEVTSAAAPS…YIKMANAKLN (1907 aa)) is stem. 6 coiled-coil regions span residues 459–480 (WEENVKEFTNVAREVTRRRNEK), 1178–1215 (LMKFASRLGNRMREINAEIEKARKHLESQSSDASSTAQ), 1266–1293 (SQWEALKEILEKKSRIVQDQTDALQAKI), 1334–1354 (ESRISKLQDDAQMVAKAKEAL), 1560–1577 (YKEFEEEAVAWEDKLNRV), and 1640–1670 (NIPNVQKSLERLAEMLNKIQKALGEYLEKER). AAA stretches follow at residues 1908 to 2133 (YGFE…VLVS), 2201 to 2459 (NAIR…FTTA), 2565 to 2814 (EVNT…WVRG), and 2908 to 3177 (TFCE…QGKV). Position 1946-1953 (1946-1953 (GPAGTGKT)) interacts with ATP. A coiled-coil region spans residues 2194–2217 (ANLEALENAIRELAAERHLVVNEL). ATP-binding positions include 2239 to 2246 (GNSGSGKS), 2604 to 2611 (GPPGSGKT), and 2946 to 2953 (GVSGSGKT). Coiled-coil stretches lie at residues 3186–3294 (LDFV…LAKA), 3420–3477 (GPLK…EMSR), and 3774–3807 (DNVIETLETLKTEAAEISAKMSNTEGVMAEVEEI). Residues 3186-3477 (LDFVTQYIKL…TQAIKAEMSR (292 aa)) are stalk. AAA stretches follow at residues 3563-3792 (LSTA…EISA) and 4001-4213 (AERF…IVDT).

It belongs to the dynein heavy chain family. In terms of assembly, consists of at least two heavy chains and a number of intermediate and light chains.

Its subcellular location is the cytoplasm. The protein localises to the cytoskeleton. Functionally, cytoplasmic dynein acts as a motor for the intracellular retrograde motility of vesicles and organelles along microtubules. Dynein has ATPase activity; the force-producing power stroke is thought to occur on release of ADP. The polypeptide is Dynein heavy chain, cytoplasmic (DHC1) (Fusarium vanettenii (Neocosmospora pisi)).